A 31-amino-acid polypeptide reads, in one-letter code: Cytochrome b6-f complex subunit 6 (31 aa).

A helical transmembrane segment spans residues 4 to 24 (ITSYFGFLLAALTITSALLIG).

The protein belongs to the PetL family. In terms of assembly, the 4 large subunits of the cytochrome b6-f complex are cytochrome b6, subunit IV (17 kDa polypeptide, PetD), cytochrome f and the Rieske protein, while the 4 small subunits are PetG, PetL, PetM and PetN. The complex functions as a dimer.

It is found in the plastid. The protein resides in the chloroplast thylakoid membrane. Functionally, component of the cytochrome b6-f complex, which mediates electron transfer between photosystem II (PSII) and photosystem I (PSI), cyclic electron flow around PSI, and state transitions. PetL is important for photoautotrophic growth as well as for electron transfer efficiency and stability of the cytochrome b6-f complex. This chain is Cytochrome b6-f complex subunit 6, found in Piper cenocladum (Ant piper).